Reading from the N-terminus, the 188-residue chain is uncharacterized protein (188 aa).

This is an uncharacterized protein from Homo sapiens (Human).